Reading from the N-terminus, the 213-residue chain is Thiamine-phosphate synthase (213 aa).

Residues 40–44 and asparagine 75 each bind 4-amino-2-methyl-5-(diphosphooxymethyl)pyrimidine; that span reads QFREK. Mg(2+) contacts are provided by aspartate 76 and aspartate 95. Serine 113 is a 4-amino-2-methyl-5-(diphosphooxymethyl)pyrimidine binding site. 139–141 contributes to the 2-[(2R,5Z)-2-carboxy-4-methylthiazol-5(2H)-ylidene]ethyl phosphate binding site; the sequence is TPS. Residue lysine 142 coordinates 4-amino-2-methyl-5-(diphosphooxymethyl)pyrimidine. 2-[(2R,5Z)-2-carboxy-4-methylthiazol-5(2H)-ylidene]ethyl phosphate contacts are provided by residues glycine 171 and 191–192; that span reads IS.

The protein belongs to the thiamine-phosphate synthase family. Mg(2+) serves as cofactor.

It carries out the reaction 2-[(2R,5Z)-2-carboxy-4-methylthiazol-5(2H)-ylidene]ethyl phosphate + 4-amino-2-methyl-5-(diphosphooxymethyl)pyrimidine + 2 H(+) = thiamine phosphate + CO2 + diphosphate. It catalyses the reaction 2-(2-carboxy-4-methylthiazol-5-yl)ethyl phosphate + 4-amino-2-methyl-5-(diphosphooxymethyl)pyrimidine + 2 H(+) = thiamine phosphate + CO2 + diphosphate. The catalysed reaction is 4-methyl-5-(2-phosphooxyethyl)-thiazole + 4-amino-2-methyl-5-(diphosphooxymethyl)pyrimidine + H(+) = thiamine phosphate + diphosphate. It participates in cofactor biosynthesis; thiamine diphosphate biosynthesis; thiamine phosphate from 4-amino-2-methyl-5-diphosphomethylpyrimidine and 4-methyl-5-(2-phosphoethyl)-thiazole: step 1/1. In terms of biological role, condenses 4-methyl-5-(beta-hydroxyethyl)thiazole monophosphate (THZ-P) and 2-methyl-4-amino-5-hydroxymethyl pyrimidine pyrophosphate (HMP-PP) to form thiamine monophosphate (TMP). In Staphylococcus aureus (strain MRSA252), this protein is Thiamine-phosphate synthase.